The primary structure comprises 182 residues: CDP-diacylglycerol--glycerol-3-phosphate 3-phosphatidyltransferase (182 aa).

Topologically, residues 2-12 are cytoplasmic; that stretch reads QFNIPTLLTLF. Residues 13–37 form a helical membrane-spanning segment; the sequence is RVILIPFFVLVFYLPVTWSPFAAAL. Residues 38-60 are Periplasmic-facing; that stretch reads IFCVAAVTDWFDGFLARRWNQST. Residues 61 to 81 traverse the membrane as a helical segment; it reads RFGAFLDPVADKVLVAIAMVL. At 82–86 the chain is on the cytoplasmic side; that stretch reads VTEHY. A helical transmembrane segment spans residues 87–107; sequence HSWWVTLPAATMIAREIIISA. Topologically, residues 108-145 are periplasmic; sequence LREWMAELGKRSSVAVSWIGKVKTTAQMVALAWLLWRP. A helical transmembrane segment spans residues 146–168; the sequence is NIWVEYAGIALFFVAAVLTLWSM. The Cytoplasmic segment spans residues 169-181; that stretch reads LQYLSAARADLLD.

It belongs to the CDP-alcohol phosphatidyltransferase class-I family.

The protein resides in the cell inner membrane. The catalysed reaction is a CDP-1,2-diacyl-sn-glycerol + sn-glycerol 3-phosphate = a 1,2-diacyl-sn-glycero-3-phospho-(1'-sn-glycero-3'-phosphate) + CMP + H(+). It functions in the pathway phospholipid metabolism; phosphatidylglycerol biosynthesis; phosphatidylglycerol from CDP-diacylglycerol: step 1/2. Catalyzes the conversion of cytidine diphosphate diacylglycerol (CDP-DG) and glycerol 3-phosphate into phosphatidylglycerol. Essential for the synthesis of anionic phospholipids, thereby playing a role in balancing the ratio of zwitterionic and anionic phospholipids, which is thought to be important for normal membrane function. The polypeptide is CDP-diacylglycerol--glycerol-3-phosphate 3-phosphatidyltransferase (Shigella sonnei (strain Ss046)).